The following is a 724-amino-acid chain: Probable methyltransferase PMT28 (724 aa).

The Cytoplasmic segment spans residues 1–22 (MMERKREMGIAYFARRIKQPRG). The chain crosses the membrane as a helical; Signal-anchor for type II membrane protein span at residues 23–43 (IWVKMTFIVVLGLCFVFFWSF). The Lumenal segment spans residues 44-724 (LSSSASTFNV…LCAQKTLWRP (681 aa)). The segment at 63-211 (EPVSSRTKSA…ISKKRKRKGP (149 aa)) is disordered. Over residues 71-98 (SAHEVSESSKLHERGKVESGSKSKEGKK) the composition is skewed to basic and acidic residues. Over residues 107 to 125 (HETKKKKEHAVSHPHKKKD) the composition is skewed to basic residues. The segment covering 126–140 (VPKPVVEEVVVKEDQ) has biased composition (basic and acidic residues). Positions 141–173 (EHEEAESDDSDQSNKEDGEEGTESDGNEGESDG) are enriched in acidic residues. N-linked (GlcNAc...) asparagine glycosylation is found at N305, N316, and N568.

This sequence belongs to the methyltransferase superfamily.

It localises to the golgi apparatus membrane. The protein is Probable methyltransferase PMT28 of Arabidopsis thaliana (Mouse-ear cress).